We begin with the raw amino-acid sequence, 496 residues long: Serine/threonine-protein kinase Sgk3 (496 aa).

In terms of domain architecture, PX spans 12 to 124 (SCPSVSIPSS…AFLQMDSPRH (113 aa)). The segment at 121–157 (SPRHQSDPSEDEDERSTSKPHSTSRNINLGPTGNPHA) is disordered. Phosphoserine occurs at positions 126 and 129. Over residues 139–151 (KPHSTSRNINLGP) the composition is skewed to polar residues. Positions 162–419 (FDFLKVIGKG…FLEIQNHPFF (258 aa)) constitute a Protein kinase domain. Residues 168 to 176 (IGKGSFGKV) and K191 each bind ATP. The Nuclear localization signal motif lies at 195–205 (KKIVLNRKEQK). Catalysis depends on D286, which acts as the Proton acceptor. T320 carries the phosphothreonine; by PDPK1 modification. Residues 420–496 (ESLSWTDLVQ…YAPPSEDLFL (77 aa)) enclose the AGC-kinase C-terminal domain. S486 carries the post-translational modification Phosphoserine.

It belongs to the protein kinase superfamily. AGC Ser/Thr protein kinase family. In terms of assembly, interacts with GSK3B and FLII. Interacts with PDPK1 in a phosphorylation-dependent manner. Activated by phosphorylation on Ser-486 by an unknown kinase (may be mTORC2 but not confirmed), transforming it into a substrate for PDPK1 which then phosphorylates it on Thr-320. In terms of tissue distribution, widely expressed, predominantly in the heart, spleen and 7-day embryo.

Its subcellular location is the cytoplasmic vesicle. It localises to the early endosome. It is found in the recycling endosome. The catalysed reaction is L-seryl-[protein] + ATP = O-phospho-L-seryl-[protein] + ADP + H(+). It catalyses the reaction L-threonyl-[protein] + ATP = O-phospho-L-threonyl-[protein] + ADP + H(+). Two specific sites, one in the kinase domain (Thr-320) and the other in the C-terminal regulatory region (Ser-486), need to be phosphorylated for its full activation. Serine/threonine-protein kinase which is involved in the regulation of a wide variety of ion channels, membrane transporters, cell growth, proliferation, survival and migration. Up-regulates Na(+) channels: SCNN1A/ENAC and SCN5A, K(+) channels: KCNA3/KV1.3, KCNE1, KCNQ1 and KCNH2/HERG, epithelial Ca(2+) channels: TRPV5 and TRPV6, chloride channel: BSND, creatine transporter: SLC6A8, Na(+)/dicarboxylate cotransporter: SLC13A2/NADC1, Na(+)-dependent phosphate cotransporter: SLC34A2/NAPI-2B, amino acid transporters: SLC1A5/ASCT2 and SLC6A19, glutamate transporters: SLC1A3/EAAT1, SLC1A6/EAAT4 and SLC1A7/EAAT5, glutamate receptors: GRIA1/GLUR1 and GRIK2/GLUR6, Na(+)/H(+) exchanger: SLC9A3/NHE3, and the Na(+)/K(+) ATPase. Plays a role in the regulation of renal tubular phosphate transport and bone density. Phosphorylates NEDD4L and GSK3B. Positively regulates ER transcription activity through phosphorylation of FLII. Negatively regulates the function of ITCH/AIP4 via its phosphorylation and thereby prevents CXCR4 from being efficiently sorted to lysosomes. This is Serine/threonine-protein kinase Sgk3 (Sgk3) from Mus musculus (Mouse).